An 899-amino-acid polypeptide reads, in one-letter code: MARHGCLGLGLFCCVLFAATVGPQPTPSIPGAPATTLTPVPQSEASMLSLNLGLNFKFHLRGPAAVWGSPVTETQPLSLGPGQEPGEEVASGLRTDPLWELLVGSSGNSLTEWGSTEGGSKPRASSLLPESTSRRSGPSDGPTAPYQPRRSTVTWDTALMVTALPSSAPRPHQSELELKFDMALRAGAAPTLGHRTLPLLPSLRASLAEIAGRLGPFGFFGTTLSPLRNFSGLSPPGETTSTSSASGVSGSLGFLGTTLSLPPYSLERKLSSPSPLDPAASLSFASIATTSLDPTVPISGPDDLSPPASLGNPSGQPECGPGSCSVGELPEREGQPPEAPRPLFFLTLEADWAEARARWGLAWEAHVYGVGALFGLVALLALLALALLPWRCPPGAPCLALLDLLLLSAGTTRAFPLFYDAYGHRDRLPALAWLLLQDLPLPCLAAGLGLACLLLARPRPPRCPTGLAALLLLGLGLAAAAALGSAAHRPLRPLRLASRGLHAFLAAFLSGLLLALSCWGGRRRRAGAPLGGSGFKGATPLPQGRSPFAPRESWRRAARTAPVAGTFGLLSGALQGYEVLHALGYGGQSGLEGPWPWWAFQLGLRLGEVGVALPLALLGLYPALCSPRVPPRCWAKLFRLSPGHAAPLLPGGWVTGPPDKEPLGSAIARGDAELLQLCALAGPGPDLLLQGGGCRGFEGAAANPAPSPASSPCSDYTVDFRPPSPINLRRSIEEALCSEALLAPGLFQGPAFEDALPGLGLYRTASLGTGGRASERSGEASGPAAPPELPSPGAWPAGSSVSSGSFCGLSRDSSSMLLCSSPDRPPRCPLVCVLSPPRPSGSSPSLPASGSYQALSPPSRDSPEPASELQAEEALLQEQFLDACRQIDELSVGSDTIDL.

Positions 1–23 (MARHGCLGLGLFCCVLFAATVGP) are cleaved as a signal peptide. Disordered regions lie at residues 110–152 (LTEW…RRST) and 295–340 (TVPI…PEAP). The next 5 helical transmembrane spans lie at 370 to 390 (VGALFGLVALLALLALALLPW), 392 to 412 (CPPGAPCLALLDLLLLSAGTT), 430 to 450 (ALAWLLLQDLPLPCLAAGLGL), 467 to 487 (LAALLLLGLGLAAAAALGSAA), and 500 to 520 (GLHAFLAAFLSGLLLALSCWG). Residue Ser641 is modified to Phosphoserine. Disordered regions lie at residues 769-797 (TGGRASERSGEASGPAAPPELPSPGAWPA) and 839-869 (PSGSSPSLPASGSYQALSPPSRDSPEPASEL). Residues 840-851 (SGSSPSLPASGS) are compositionally biased toward low complexity.

It is found in the membrane. In Homo sapiens (Human), this protein is Proline-rich transmembrane protein 4 (PRRT4).